The primary structure comprises 88 residues: Cell division topological specificity factor (88 aa).

It belongs to the MinE family.

In terms of biological role, prevents the cell division inhibition by proteins MinC and MinD at internal division sites while permitting inhibition at polar sites. This ensures cell division at the proper site by restricting the formation of a division septum at the midpoint of the long axis of the cell. The chain is Cell division topological specificity factor from Psychromonas ingrahamii (strain DSM 17664 / CCUG 51855 / 37).